The following is a 253-amino-acid chain: Triosephosphate isomerase (253 aa).

Residue 9–11 (NWK) participates in substrate binding. H98 functions as the Electrophile in the catalytic mechanism. E170 functions as the Proton acceptor in the catalytic mechanism. Residues G176, S216, and 237-238 (GG) each bind substrate.

This sequence belongs to the triosephosphate isomerase family. Homodimer.

The protein resides in the cytoplasm. It carries out the reaction D-glyceraldehyde 3-phosphate = dihydroxyacetone phosphate. It functions in the pathway carbohydrate biosynthesis; gluconeogenesis. It participates in carbohydrate degradation; glycolysis; D-glyceraldehyde 3-phosphate from glycerone phosphate: step 1/1. Its function is as follows. Involved in the gluconeogenesis. Catalyzes stereospecifically the conversion of dihydroxyacetone phosphate (DHAP) to D-glyceraldehyde-3-phosphate (G3P). The protein is Triosephosphate isomerase of Amoebophilus asiaticus (strain 5a2).